We begin with the raw amino-acid sequence, 77 residues long: Putative antitoxin VapB3 (77 aa).

This sequence belongs to the UPF0330 family.

Possibly the antitoxin component of a type II toxin-antitoxin (TA) system. Its cognate toxin is VapC3 (Potential). The protein is Putative antitoxin VapB3 (vapB3) of Methanocaldococcus jannaschii (strain ATCC 43067 / DSM 2661 / JAL-1 / JCM 10045 / NBRC 100440) (Methanococcus jannaschii).